A 533-amino-acid polypeptide reads, in one-letter code: MVQVLSVLVIPLLTLFFGYVASSSIDLSVDTSEYNRPLIHFTPEKGWMNDPNGLFYDKTAKLWHLYFQYNPNATAWGQPLYWGHATSNDLVHWDEHEIAIGPEHDNEGIFSGSIVVDHNNTSGFFNSSIDPNQRIVAIYTNNIPDLQTQDIAFSLDGGYTFTKYENNPVIDVSSNQFRDPKVFWHERFKSMDHGCSEIARVKIQIFGSANLKNWVLNSNFSSGYYGNQYGMSRLIEVPIENSDKSKWVMFLAINPGSPLGGSINQYFVGDFDGFQFVPDDSQTRFVDIGKDFYAFQTFSEVEHGVLGLAWASNWQYADQVPTNPWRSSTSLARNYTLRYVIQMLKLTANIDKSVLPDSINVVDKLKKKNVKLTNKKPIKTNFKGSTGLFDFNITFKVLNLNVSPGKTHFDILINSQELNSSVDSIKIGFDSSQSLFYIDRHIPNVEFPRKQFFTDKLAAYLEPLDYDQDLRVFSLYGIVDKNIIELYFNDGTVAMTNTFFMGEGKYPHDIQIVTDTEEPLFELESVIIRELNK.

Residues 1-22 (MVQVLSVLVIPLLTLFFGYVAS) form the signal peptide. Substrate contacts are provided by residues 47-50 (WMND) and Q68. Residue D50 is part of the active site. N-linked (GlcNAc...) asparagine glycosylation occurs at N72. 110–111 (FS) contacts substrate. N119, N120, and N126 each carry an N-linked (GlcNAc...) asparagine glycan. 178-179 (RD) provides a ligand contact to substrate. N219 is a glycosylation site (N-linked (GlcNAc...) asparagine). Residue W314 participates in substrate binding. N-linked (GlcNAc...) asparagine glycans are attached at residues N334, N392, and N419.

Belongs to the glycosyl hydrolase 32 family.

It catalyses the reaction Hydrolysis of terminal non-reducing beta-D-fructofuranoside residues in beta-D-fructofuranosides.. This Schwanniomyces occidentalis (Yeast) protein is Invertase (INV).